The primary structure comprises 948 residues: RNA polymerase-associated protein RapA (948 aa).

The 169-residue stretch at 164 to 332 (EVADRSAPRV…FARLRLLDPN (169 aa)) folds into the Helicase ATP-binding domain. 177–184 (DEVGLGKT) serves as a coordination point for ATP. Residues 278-281 (DEAH) carry the DEAH box motif. In terms of domain architecture, Helicase C-terminal spans 473–627 (RVDWLIDTLK…TCPTGNALQH (155 aa)).

Belongs to the SNF2/RAD54 helicase family. RapA subfamily. In terms of assembly, interacts with the RNAP. Has a higher affinity for the core RNAP than for the holoenzyme. Its ATPase activity is stimulated by binding to RNAP.

Transcription regulator that activates transcription by stimulating RNA polymerase (RNAP) recycling in case of stress conditions such as supercoiled DNA or high salt concentrations. Probably acts by releasing the RNAP, when it is trapped or immobilized on tightly supercoiled DNA. Does not activate transcription on linear DNA. Probably not involved in DNA repair. In Pseudomonas putida (strain ATCC 47054 / DSM 6125 / CFBP 8728 / NCIMB 11950 / KT2440), this protein is RNA polymerase-associated protein RapA.